The sequence spans 376 residues: ATP phosphoribosyltransferase regulatory subunit (376 aa).

This sequence belongs to the class-II aminoacyl-tRNA synthetase family. HisZ subfamily. Heteromultimer composed of HisG and HisZ subunits.

It is found in the cytoplasm. The protein operates within amino-acid biosynthesis; L-histidine biosynthesis; L-histidine from 5-phospho-alpha-D-ribose 1-diphosphate: step 1/9. Required for the first step of histidine biosynthesis. May allow the feedback regulation of ATP phosphoribosyltransferase activity by histidine. This chain is ATP phosphoribosyltransferase regulatory subunit, found in Brucella anthropi (strain ATCC 49188 / DSM 6882 / CCUG 24695 / JCM 21032 / LMG 3331 / NBRC 15819 / NCTC 12168 / Alc 37) (Ochrobactrum anthropi).